A 377-amino-acid chain; its full sequence is Phospho-N-acetylmuramoyl-pentapeptide-transferase (377 aa).

10 consecutive transmembrane segments (helical) span residues 27 to 47, 71 to 91, 94 to 114, 139 to 159, 182 to 202, 216 to 236, 252 to 272, 280 to 300, 305 to 325, and 354 to 374; these read TAFA…YVIE, GTPT…TLLW, LSDP…AIGF, ILAS…GSYS, VPHL…IVIV, GLAI…TYVS, MVGE…GFLW, IFMG…VAVV, LLLP…ILQV, and KVIV…LTTL.

Belongs to the glycosyltransferase 4 family. MraY subfamily. Mg(2+) is required as a cofactor.

Its subcellular location is the cell inner membrane. The enzyme catalyses UDP-N-acetyl-alpha-D-muramoyl-L-alanyl-gamma-D-glutamyl-meso-2,6-diaminopimeloyl-D-alanyl-D-alanine + di-trans,octa-cis-undecaprenyl phosphate = di-trans,octa-cis-undecaprenyl diphospho-N-acetyl-alpha-D-muramoyl-L-alanyl-D-glutamyl-meso-2,6-diaminopimeloyl-D-alanyl-D-alanine + UMP. It functions in the pathway cell wall biogenesis; peptidoglycan biosynthesis. In terms of biological role, catalyzes the initial step of the lipid cycle reactions in the biosynthesis of the cell wall peptidoglycan: transfers peptidoglycan precursor phospho-MurNAc-pentapeptide from UDP-MurNAc-pentapeptide onto the lipid carrier undecaprenyl phosphate, yielding undecaprenyl-pyrophosphoryl-MurNAc-pentapeptide, known as lipid I. The polypeptide is Phospho-N-acetylmuramoyl-pentapeptide-transferase (Acidobacterium capsulatum (strain ATCC 51196 / DSM 11244 / BCRC 80197 / JCM 7670 / NBRC 15755 / NCIMB 13165 / 161)).